Consider the following 240-residue polypeptide: Epoxyqueuosine reductase QueH (240 aa).

[4Fe-4S] cluster contacts are provided by C43, C44, C129, and C132. C211 and C213 form a disulfide bridge.

It belongs to the QueH family.

It catalyses the reaction epoxyqueuosine(34) in tRNA + AH2 = queuosine(34) in tRNA + A + H2O. It participates in tRNA modification; tRNA-queuosine biosynthesis. Functionally, catalyzes the conversion of epoxyqueuosine (oQ) to queuosine (Q), which is a hypermodified base found in the wobble positions of tRNA(Asp), tRNA(Asn), tRNA(His) and tRNA(Tyr). This chain is Epoxyqueuosine reductase QueH, found in Staphylococcus aureus (strain Mu50 / ATCC 700699).